The chain runs to 205 residues: Imidazoleglycerol-phosphate dehydratase (205 aa).

Belongs to the imidazoleglycerol-phosphate dehydratase family.

Its subcellular location is the cytoplasm. It catalyses the reaction D-erythro-1-(imidazol-4-yl)glycerol 3-phosphate = 3-(imidazol-4-yl)-2-oxopropyl phosphate + H2O. It functions in the pathway amino-acid biosynthesis; L-histidine biosynthesis; L-histidine from 5-phospho-alpha-D-ribose 1-diphosphate: step 6/9. In Chloroflexus aggregans (strain MD-66 / DSM 9485), this protein is Imidazoleglycerol-phosphate dehydratase.